Here is a 42-residue protein sequence, read N- to C-terminus: Photosystem I reaction center subunit IX (42 aa).

Residues 7–27 (YLSVAPVLSTLWFGALAGLLI) traverse the membrane as a helical segment.

It belongs to the PsaJ family.

The protein localises to the plastid. It is found in the chloroplast thylakoid membrane. Its function is as follows. May help in the organization of the PsaE and PsaF subunits. The sequence is that of Photosystem I reaction center subunit IX from Platanus occidentalis (Sycamore).